The sequence spans 208 residues: Large ribosomal subunit protein uL3 (208 aa).

Residues 122 to 148 (KRHGQSRGPMAHGSRYHRRPGSMGPVA) are disordered.

This sequence belongs to the universal ribosomal protein uL3 family. In terms of assembly, part of the 50S ribosomal subunit. Forms a cluster with proteins L14 and L19.

One of the primary rRNA binding proteins, it binds directly near the 3'-end of the 23S rRNA, where it nucleates assembly of the 50S subunit. The protein is Large ribosomal subunit protein uL3 of Streptococcus pyogenes serotype M1.